The sequence spans 321 residues: Lipoyl synthase (321 aa).

[4Fe-4S] cluster-binding residues include Cys68, Cys73, Cys79, Cys94, Cys98, Cys101, and Ser308. The Radical SAM core domain occupies 80–297; that stretch reads FNHGTATFMI…KVIALELGFT (218 aa).

This sequence belongs to the radical SAM superfamily. Lipoyl synthase family. [4Fe-4S] cluster is required as a cofactor.

The protein resides in the cytoplasm. The enzyme catalyses [[Fe-S] cluster scaffold protein carrying a second [4Fe-4S](2+) cluster] + N(6)-octanoyl-L-lysyl-[protein] + 2 oxidized [2Fe-2S]-[ferredoxin] + 2 S-adenosyl-L-methionine + 4 H(+) = [[Fe-S] cluster scaffold protein] + N(6)-[(R)-dihydrolipoyl]-L-lysyl-[protein] + 4 Fe(3+) + 2 hydrogen sulfide + 2 5'-deoxyadenosine + 2 L-methionine + 2 reduced [2Fe-2S]-[ferredoxin]. Its pathway is protein modification; protein lipoylation via endogenous pathway; protein N(6)-(lipoyl)lysine from octanoyl-[acyl-carrier-protein]: step 2/2. Catalyzes the radical-mediated insertion of two sulfur atoms into the C-6 and C-8 positions of the octanoyl moiety bound to the lipoyl domains of lipoate-dependent enzymes, thereby converting the octanoylated domains into lipoylated derivatives. The chain is Lipoyl synthase from Aliivibrio salmonicida (strain LFI1238) (Vibrio salmonicida (strain LFI1238)).